The sequence spans 294 residues: 33 kDa chaperonin (294 aa).

Cystine bridges form between Cys-231–Cys-233 and Cys-264–Cys-267.

Belongs to the HSP33 family. Post-translationally, under oxidizing conditions two disulfide bonds are formed involving the reactive cysteines. Under reducing conditions zinc is bound to the reactive cysteines and the protein is inactive.

The protein localises to the cytoplasm. Its function is as follows. Redox regulated molecular chaperone. Protects both thermally unfolding and oxidatively damaged proteins from irreversible aggregation. Plays an important role in the bacterial defense system toward oxidative stress. The chain is 33 kDa chaperonin from Aeromonas salmonicida (strain A449).